The sequence spans 82 residues: Probable [Fe-S]-dependent transcriptional repressor (82 aa).

The iron-sulfur cluster site is built by cysteine 56, cysteine 61, cysteine 64, and cysteine 71.

The protein belongs to the FeoC family.

Functionally, may function as a transcriptional regulator that controls feoABC expression. In Yersinia enterocolitica serotype O:8 / biotype 1B (strain NCTC 13174 / 8081), this protein is Probable [Fe-S]-dependent transcriptional repressor.